The primary structure comprises 184 residues: Prolyl-tRNA synthetase associated domain-containing protein 1 (184 aa).

This sequence belongs to the PRORSD1 family.

The sequence is that of Prolyl-tRNA synthetase associated domain-containing protein 1 (Prorsd1) from Danio rerio (Zebrafish).